We begin with the raw amino-acid sequence, 262 residues long: 1,2-epoxyphenylacetyl-CoA isomerase (262 aa).

The protein belongs to the enoyl-CoA hydratase/isomerase family.

The catalysed reaction is 2-(1,2-epoxy-1,2-dihydrophenyl)acetyl-CoA = 2-oxepin-2(3H)-ylideneacetyl-CoA. The protein operates within aromatic compound metabolism; phenylacetate degradation. In terms of biological role, catalyzes the reversible conversion of the epoxide to 2-oxepin-2(3H)-ylideneacetyl-CoA (oxepin-CoA). The polypeptide is 1,2-epoxyphenylacetyl-CoA isomerase (paaG) (Escherichia coli (strain K12)).